Consider the following 433-residue polypeptide: Serine--tRNA ligase (433 aa).

235–237 (TSE) contacts L-serine. Residue 266–268 (RSE) participates in ATP binding. Residue glutamate 289 coordinates L-serine. 353-356 (EISS) provides a ligand contact to ATP. L-serine is bound at residue serine 388.

Belongs to the class-II aminoacyl-tRNA synthetase family. Type-1 seryl-tRNA synthetase subfamily. As to quaternary structure, homodimer. The tRNA molecule binds across the dimer.

The protein resides in the cytoplasm. It catalyses the reaction tRNA(Ser) + L-serine + ATP = L-seryl-tRNA(Ser) + AMP + diphosphate + H(+). It carries out the reaction tRNA(Sec) + L-serine + ATP = L-seryl-tRNA(Sec) + AMP + diphosphate + H(+). It functions in the pathway aminoacyl-tRNA biosynthesis; selenocysteinyl-tRNA(Sec) biosynthesis; L-seryl-tRNA(Sec) from L-serine and tRNA(Sec): step 1/1. Catalyzes the attachment of serine to tRNA(Ser). Is also able to aminoacylate tRNA(Sec) with serine, to form the misacylated tRNA L-seryl-tRNA(Sec), which will be further converted into selenocysteinyl-tRNA(Sec). This chain is Serine--tRNA ligase, found in Burkholderia vietnamiensis (strain G4 / LMG 22486) (Burkholderia cepacia (strain R1808)).